The chain runs to 133 residues: ATP synthase epsilon chain (133 aa).

It belongs to the ATPase epsilon chain family. In terms of assembly, F-type ATPases have 2 components, CF(1) - the catalytic core - and CF(0) - the membrane proton channel. CF(1) has five subunits: alpha(3), beta(3), gamma(1), delta(1), epsilon(1). CF(0) has three main subunits: a, b and c.

It localises to the cell membrane. Functionally, produces ATP from ADP in the presence of a proton gradient across the membrane. In Bacillus cereus (strain ATCC 14579 / DSM 31 / CCUG 7414 / JCM 2152 / NBRC 15305 / NCIMB 9373 / NCTC 2599 / NRRL B-3711), this protein is ATP synthase epsilon chain.